The primary structure comprises 602 residues: Elongation factor 4 (602 aa).

A tr-type G domain is found at 6-188; that stretch reads DRIRNFCIIA…RIVRDVPPPG (183 aa). Residues 18-23 and 135-138 contribute to the GTP site; these read DHGKST and NKID.

Belongs to the TRAFAC class translation factor GTPase superfamily. Classic translation factor GTPase family. LepA subfamily.

The protein localises to the cell membrane. It catalyses the reaction GTP + H2O = GDP + phosphate + H(+). Required for accurate and efficient protein synthesis under certain stress conditions. May act as a fidelity factor of the translation reaction, by catalyzing a one-codon backward translocation of tRNAs on improperly translocated ribosomes. Back-translocation proceeds from a post-translocation (POST) complex to a pre-translocation (PRE) complex, thus giving elongation factor G a second chance to translocate the tRNAs correctly. Binds to ribosomes in a GTP-dependent manner. The chain is Elongation factor 4 from Desulforudis audaxviator (strain MP104C).